A 267-amino-acid polypeptide reads, in one-letter code: Indole-3-glycerol phosphate synthase (267 aa).

Belongs to the TrpC family.

It catalyses the reaction 1-(2-carboxyphenylamino)-1-deoxy-D-ribulose 5-phosphate + H(+) = (1S,2R)-1-C-(indol-3-yl)glycerol 3-phosphate + CO2 + H2O. Its pathway is amino-acid biosynthesis; L-tryptophan biosynthesis; L-tryptophan from chorismate: step 4/5. In Dichelobacter nodosus (strain VCS1703A), this protein is Indole-3-glycerol phosphate synthase.